A 137-amino-acid polypeptide reads, in one-letter code: Cytochrome c-type biogenesis protein CcmE (137 aa).

The Cytoplasmic portion of the chain corresponds to 1 to 8; it reads MQKGAKNR. The chain crosses the membrane as a helical; Signal-anchor for type II membrane protein span at residues 9-29; the sequence is LITIIICFCSAVIGVSIILYN. The Periplasmic segment spans residues 30–137; the sequence is LEKSIVFFVP…NTVIPAKAGI (108 aa). H120 and Y124 together coordinate heme.

It belongs to the CcmE/CycJ family.

It is found in the cell inner membrane. Its function is as follows. Heme chaperone required for the biogenesis of c-type cytochromes. Transiently binds heme delivered by CcmC and transfers the heme to apo-cytochromes in a process facilitated by CcmF and CcmH. The chain is Cytochrome c-type biogenesis protein CcmE from Rickettsia bellii (strain OSU 85-389).